The sequence spans 223 residues: Uracil-DNA glycosylase (223 aa).

The Proton acceptor role is filled by Asp-61.

It belongs to the uracil-DNA glycosylase (UDG) superfamily. UNG family.

The protein localises to the cytoplasm. It carries out the reaction Hydrolyzes single-stranded DNA or mismatched double-stranded DNA and polynucleotides, releasing free uracil.. Excises uracil residues from the DNA which can arise as a result of misincorporation of dUMP residues by DNA polymerase or due to deamination of cytosine. This Tolumonas auensis (strain DSM 9187 / NBRC 110442 / TA 4) protein is Uracil-DNA glycosylase.